Consider the following 415-residue polypeptide: Gamma-glutamyl phosphate reductase (415 aa).

This sequence belongs to the gamma-glutamyl phosphate reductase family.

Its subcellular location is the cytoplasm. The enzyme catalyses L-glutamate 5-semialdehyde + phosphate + NADP(+) = L-glutamyl 5-phosphate + NADPH + H(+). It participates in amino-acid biosynthesis; L-proline biosynthesis; L-glutamate 5-semialdehyde from L-glutamate: step 2/2. Functionally, catalyzes the NADPH-dependent reduction of L-glutamate 5-phosphate into L-glutamate 5-semialdehyde and phosphate. The product spontaneously undergoes cyclization to form 1-pyrroline-5-carboxylate. This Shouchella clausii (strain KSM-K16) (Alkalihalobacillus clausii) protein is Gamma-glutamyl phosphate reductase.